Here is a 168-residue protein sequence, read N- to C-terminus: GTP-dependent dephospho-CoA kinase (168 aa).

6 residues coordinate GTP: D49, V50, V51, D68, K70, and E120.

It belongs to the GTP-dependent DPCK family.

It catalyses the reaction 3'-dephospho-CoA + GTP = GDP + CoA + H(+). Its pathway is cofactor biosynthesis; coenzyme A biosynthesis. In terms of biological role, catalyzes the GTP-dependent phosphorylation of the 3'-hydroxyl group of dephosphocoenzyme A to form coenzyme A (CoA). This Pyrobaculum calidifontis (strain DSM 21063 / JCM 11548 / VA1) protein is GTP-dependent dephospho-CoA kinase.